A 240-amino-acid polypeptide reads, in one-letter code: Biosynthetic peptidoglycan transglycosylase (240 aa).

Residues 27–47 traverse the membrane as a helical segment; that stretch reads VVLLFFFAVFALLLIFRFVPI.

This sequence belongs to the glycosyltransferase 51 family.

The protein resides in the cell inner membrane. It carries out the reaction [GlcNAc-(1-&gt;4)-Mur2Ac(oyl-L-Ala-gamma-D-Glu-L-Lys-D-Ala-D-Ala)](n)-di-trans,octa-cis-undecaprenyl diphosphate + beta-D-GlcNAc-(1-&gt;4)-Mur2Ac(oyl-L-Ala-gamma-D-Glu-L-Lys-D-Ala-D-Ala)-di-trans,octa-cis-undecaprenyl diphosphate = [GlcNAc-(1-&gt;4)-Mur2Ac(oyl-L-Ala-gamma-D-Glu-L-Lys-D-Ala-D-Ala)](n+1)-di-trans,octa-cis-undecaprenyl diphosphate + di-trans,octa-cis-undecaprenyl diphosphate + H(+). It functions in the pathway cell wall biogenesis; peptidoglycan biosynthesis. In terms of biological role, peptidoglycan polymerase that catalyzes glycan chain elongation from lipid-linked precursors. The chain is Biosynthetic peptidoglycan transglycosylase from Haemophilus influenzae (strain PittEE).